Here is a 547-residue protein sequence, read N- to C-terminus: Chaperonin GroEL (547 aa).

ATP-binding positions include 30 to 33 (TLGP), Lys51, 87 to 91 (DGTTT), Gly415, and Asp496. The disordered stretch occupies residues 527-547 (KKDSPAMPGGGGMGGMGGMDF). The segment covering 534–547 (PGGGGMGGMGGMDF) has biased composition (gly residues).

The protein belongs to the chaperonin (HSP60) family. In terms of assembly, forms a cylinder of 14 subunits composed of two heptameric rings stacked back-to-back. Interacts with the co-chaperonin GroES.

It is found in the cytoplasm. It catalyses the reaction ATP + H2O + a folded polypeptide = ADP + phosphate + an unfolded polypeptide.. In terms of biological role, together with its co-chaperonin GroES, plays an essential role in assisting protein folding. The GroEL-GroES system forms a nano-cage that allows encapsulation of the non-native substrate proteins and provides a physical environment optimized to promote and accelerate protein folding. In Methylocella silvestris (strain DSM 15510 / CIP 108128 / LMG 27833 / NCIMB 13906 / BL2), this protein is Chaperonin GroEL.